The chain runs to 360 residues: (+)-6a-hydroxymaackiain 3-O-methyltransferase 2 (360 aa).

Residues 202–205, D226, 226–227, 246–247, and K260 contribute to the S-adenosyl-L-methionine site; these read VAGG, DQ, and DM. H264 (proton acceptor) is an active-site residue.

Belongs to the class I-like SAM-binding methyltransferase superfamily. Cation-independent O-methyltransferase family. COMT subfamily.

It carries out the reaction (+)-6a-hydroxymaackiain + S-adenosyl-L-methionine = (+)-pisatin + S-adenosyl-L-homocysteine + H(+). In terms of biological role, 3-O-methyltransferase involved in the phytoalexin pisatin biosynthesis. Can use (+)-6a-hydroxymaackiain, (+)-maackiain and with a lower activity (+)-medicarpin and 2,7,4'-trihydroxyisoflavanone as substrates, but not (-)-6a-hydroxymaackiain, daidzein, formononetin or isoliquiritigenin. The chain is (+)-6a-hydroxymaackiain 3-O-methyltransferase 2 (HMM2) from Pisum sativum (Garden pea).